The following is a 746-amino-acid chain: Histone-lysine N-methyltransferase EZH2 (746 aa).

The interaction with DNMT1, DNMT3A and DNMT3B stretch occupies residues 1 to 340 (MGQTGKKSEK…AKEFAAALTA (340 aa)). The residue at position 21 (serine 21) is a Phosphoserine; by PKB/AKT1. The segment at 39–68 (KSMFSSNRQKILERTEILNQEWKQRRIQPV) is interaction with EED. Serine 75 is a glycosylation site (O-linked (GlcNAc) serine). Serine 76 carries the phosphoserine modification. The tract at residues 180–222 (QYNDDDDDDDGDDPEEREEKQKDLEDHRDDKESRPPRKFPSDK) is disordered. Positions 182–195 (NDDDDDDDGDDPEE) are enriched in acidic residues. The segment covering 196-222 (REEKQKDLEDHRDDKESRPPRKFPSDK) has biased composition (basic and acidic residues). Residues 329 to 522 (EGAKEFAAAL…SSNHVYNYQP (194 aa)) form an interaction with CDYL region. Residue threonine 339 is modified to Phosphothreonine. The disordered stretch occupies residues 340–426 (AERIKTPPKR…PIKMKPNIEP (87 aa)). Threonine 345 bears the Phosphothreonine; by CDK1 and CDK2 mark. A compositionally biased stretch (basic residues) spans 345–357 (TPPKRPGGRRRGR). A phosphoserine mark is found at serine 363 and serine 366. Threonine 367 carries the phosphothreonine modification. Basic and acidic residues predominate over residues 374–385 (ESKDTDSDREAG). Threonine 487 bears the Phosphothreonine mark. The CXC domain maps to 503–605 (CRKIQLKKDG…SKNVSCKNCS (103 aa)). Residues 612-727 (KHLLLAPSDV…TGEELFFDYR (116 aa)) form the SET domain. A Glycyl lysine isopeptide (Lys-Gly) (interchain with G-Cter in SUMO2) cross-link involves residue lysine 634.

This sequence belongs to the class V-like SAM-binding methyltransferase superfamily. Histone-lysine methyltransferase family. EZ subfamily. As to quaternary structure, component of the PRC2/EED-EZH2 complex, which includes EED, EZH2, SUZ12, RBBP4 and RBBP7 and possibly AEBP2. The minimum components required for methyltransferase activity of the PRC2/EED-EZH2 complex are EED, EZH2 and SUZ12. The PRC2 complex may also interact with DNMT1, DNMT3A, DNMT3B and PHF1 via the EZH2 subunit and with SIRT1 via the SUZ12 subunit. Interacts with HDAC1 and HDAC2. Binds ATRX via the SET domain. Interacts with PRAME. Interacts with CDYL. Interacts with BMAL1, CLOCK and CRY1. Interacts with DNMT3L; the interaction is direct. Interacts with EZHIP; the interaction blocks EZH2 methyltransferase activity. Interacts with ZNF263; recruited to the SIX3 promoter along with other proteins involved in chromatin modification and transcriptional corepression where it contributes to transcriptional repression. Interacts with ARMC12. Interacts with ZMYND8; the interaction is dependent on the presence of chromatin. Interacts with DDX18; this interaction inhibits the PRC2 complex. Phosphorylated by AKT1. Phosphorylation by AKT1 reduces methyltransferase activity. Phosphorylation at Thr-345 by CDK1 and CDK2 promotes maintenance of H3K27me3 levels at EZH2-target loci, thus leading to epigenetic gene silencing. In terms of processing, sumoylated. Post-translationally, glycosylated: O-GlcNAcylation at Ser-75 by OGT increases stability of EZH2 and facilitates the formation of H3K27me3 by the PRC2/EED-EZH2 complex.

It is found in the nucleus. The enzyme catalyses L-lysyl(27)-[histone H3] + 3 S-adenosyl-L-methionine = N(6),N(6),N(6)-trimethyl-L-lysyl(27)-[histone H3] + 3 S-adenosyl-L-homocysteine + 3 H(+). Polycomb group (PcG) protein. Catalytic subunit of the PRC2/EED-EZH2 complex, which methylates 'Lys-9' (H3K9me) and 'Lys-27' (H3K27me) of histone H3, leading to transcriptional repression of the affected target gene. Able to mono-, di- and trimethylate 'Lys-27' of histone H3 to form H3K27me1, H3K27me2 and H3K27me3, respectively. Displays a preference for substrates with less methylation, loses activity when progressively more methyl groups are incorporated into H3K27, H3K27me0 &gt; H3K27me1 &gt; H3K27me2. Compared to EZH1-containing complexes, it is more abundant in embryonic stem cells and plays a major role in forming H3K27me3, which is required for embryonic stem cell identity and proper differentiation. The PRC2/EED-EZH2 complex may also serve as a recruiting platform for DNA methyltransferases, thereby linking two epigenetic repression systems. EZH2 can also methylate non-histone proteins such as the transcription factor GATA4 and the nuclear receptor RORA. Regulates the circadian clock via histone methylation at the promoter of the circadian genes. Essential for the CRY1/2-mediated repression of the CLOCK-BMAL1 transcriptional activation of PER1/2. Involved in the di and trimethylation of 'Lys-27' of histone H3 on PER1/2 promoters which is necessary for the CRY1/2 proteins to inhibit transcription. The protein is Histone-lysine N-methyltransferase EZH2 (EZH2) of Macaca fascicularis (Crab-eating macaque).